A 212-amino-acid chain; its full sequence is uncharacterized protein (212 aa).

Residue C52 is the Acyl-thioester intermediate of the active site. Catalysis depends on residues H89 and D104.

The protein belongs to the arylamine N-acetyltransferase family.

This is an uncharacterized protein from Acanthamoeba polyphaga (Amoeba).